A 409-amino-acid chain; its full sequence is MSFLKLFKQFVVTGFNKKLLFLSETTCWSYEIQPDLPLEKCRPKKYFDADSDSDEESTQQPQKPPTNGNGTADNVQIVALEVHEGKSLLAVATSDKSLFLFAIDPEGDETNKDRLKLLSRRMVSRTSSCMKFAASGKFLVVCDKGGDCYRYDCDDDDCKKPGRWLLGHMSQVLDVLVPDNERFIITSDRDEKIRVTNHPDCHSIETFCLGHGEFVSQLEFVTAKDGKSRLLSLSGDKTLRLWDYETGKEVARKELSHPGNRFAVKQLLDGTLLVAVLFYEPTEMAIYKLTEVESLTSETIQTLKTNQNEVFSSFAFDERNNLLSLVVDKVTEKISLKWYQFEQENCKFNDLTPNPLEKLFFDNTENDKISYVDSVSFLFKKKFDNLKDYQERKRRRIVEGGKYNYGGRM.

Positions 48-72 (DADSDSDEESTQQPQKPPTNGNGTA) are disordered. Residues 58–72 (TQQPQKPPTNGNGTA) are compositionally biased toward polar residues. WD repeat units follow at residues 72-111 (ADNVQIVALEVHEGKSLLAVATSDKSLFLFAIDPEGDETN), 122-161 (MVSRTSSCMKFAASGKFLVVCDKGGDCYRYDCDDDDCKKP), 167-206 (GHMSQVLDVLVPDNERFIITSDRDEKIRVTNHPDCHSIET), and 210-252 (GHGE…EVAR).

The protein belongs to the WD repeat TRM82 family. Forms a heterodimer with the catalytic subunit.

The protein localises to the nucleus. The protein operates within tRNA modification; N(7)-methylguanine-tRNA biosynthesis. In terms of biological role, required for the formation of N(7)-methylguanine at position 46 (m7G46) in tRNA. In the complex, it is required to stabilize and induce conformational changes of the catalytic subunit. In Aedes aegypti (Yellowfever mosquito), this protein is tRNA (guanine-N(7)-)-methyltransferase non-catalytic subunit wuho.